The following is an 863-amino-acid chain: Cilia- and flagella-associated protein 58 (863 aa).

Coiled-coil stretches lie at residues 107-600 (TVKE…NERD) and 631-815 (QSQY…KQVF). The segment at 836–863 (GPSLLDQLPGGSGTGSGGMATGGGVGMS) is disordered. Gly residues predominate over residues 845–863 (GGSGTGSGGMATGGGVGMS).

This sequence belongs to the CFAP58 family.

It is found in the cell projection. The protein resides in the cilium. Its subcellular location is the flagellum. The chain is Cilia- and flagella-associated protein 58 from Chlamydomonas reinhardtii (Chlamydomonas smithii).